We begin with the raw amino-acid sequence, 598 residues long: MAYVPLSGTDVRIFSNVPFSNDYKSTRWFTNADAQYSYFNAKPRVHVINECNFVGLKEGTPHIRVNKRIDDLYNACYMIFRNTQYSNKWFYCFVTRLEYVNSGVTNLYFEIDVIQTWMFDFKFQPSYIVREHQEMWDANNEPLTNTIDEGLNYGTEYDVVAVEQYKPYGDLMFMVCISKSKMHATAGETFKAGEIAANINGAPQPLSYYVHPFYEDGSSPKVTIGSNEVQVSKPTDFLKNMFTQEHAVNNIVSLYVTDYIGLNIHYDESAKTMSLRDTMFEHAQIADDKHPNVNTIYLKEVKEYEEKTIDTGYKFASFANNEQSKLLMYPYCVTTITDFKGNQIDIKNEYVNGSNLKIQVRGSLGVSNKVTYSVQDYNADTTLSGDQNLTASCNTSLINNNPNDVAIINDYLSAYLQGNKNSLENQKDSILFNGVMSMLGNGIGAVGSAATGSAVGVASSATGMVSSAGNAVLQIQGMQAKQADIANTPPQLVKMGGNTAYDYGNGYRGVYVIKKQIKEEYRNILSDFSRKYGYKTNLVKMPNLRTRESYNYVQTKDCNIIGNLNNEDLQKIRTIFDSGITLWHADPVGDYTLNNEVR.

Belongs to the picovirinae distal tube protein family. As to quaternary structure, homohexamer; forms a hexameric tube structure with six flexible hydrophobic loops.

It localises to the virion. Its function is as follows. Distal (knob) tail protein that plugs the end of the tube before DNA ejection and forms a channel perforating the host membrane during ejection. The chain is Tail knob protein gp9 (9) from Bacillus subtilis (Bacteriophage B103).